The chain runs to 231 residues: Deoxyribose-phosphate aldolase (231 aa).

The active-site Proton donor/acceptor is Asp-97. The active-site Schiff-base intermediate with acetaldehyde is the Lys-162. Lys-191 (proton donor/acceptor) is an active-site residue.

Belongs to the DeoC/FbaB aldolase family. DeoC type 1 subfamily.

It is found in the cytoplasm. It catalyses the reaction 2-deoxy-D-ribose 5-phosphate = D-glyceraldehyde 3-phosphate + acetaldehyde. The protein operates within carbohydrate degradation; 2-deoxy-D-ribose 1-phosphate degradation; D-glyceraldehyde 3-phosphate and acetaldehyde from 2-deoxy-alpha-D-ribose 1-phosphate: step 2/2. Catalyzes a reversible aldol reaction between acetaldehyde and D-glyceraldehyde 3-phosphate to generate 2-deoxy-D-ribose 5-phosphate. This is Deoxyribose-phosphate aldolase from Caldanaerobacter subterraneus subsp. tengcongensis (strain DSM 15242 / JCM 11007 / NBRC 100824 / MB4) (Thermoanaerobacter tengcongensis).